We begin with the raw amino-acid sequence, 653 residues long: Chaperone protein dnaK3 (653 aa).

Residue Thr197 is modified to Phosphothreonine; by autocatalysis.

Belongs to the heat shock protein 70 family.

In terms of biological role, acts as a chaperone. The sequence is that of Chaperone protein dnaK3 (dnaK3) from Nostoc sp. (strain PCC 7120 / SAG 25.82 / UTEX 2576).